We begin with the raw amino-acid sequence, 100 residues long: Cell division protein FtsB (100 aa).

The Cytoplasmic portion of the chain corresponds to 1–3; the sequence is MKW. The chain crosses the membrane as a helical span at residues 4–21; that stretch reads LAIILVVALLALQYRLWM. Residues 22 to 100 lie on the Periplasmic side of the membrane; that stretch reads GEGSIASVVS…TDKDTKKNKK (79 aa). Positions 26–73 form a coiled coil; it reads IASVVSLNREIAKQKEENARLRERNRLLAAEVDALKQGKDAIEERARN.

It belongs to the FtsB family. In terms of assembly, part of a complex composed of FtsB, FtsL and FtsQ.

It is found in the cell inner membrane. Its function is as follows. Essential cell division protein. May link together the upstream cell division proteins, which are predominantly cytoplasmic, with the downstream cell division proteins, which are predominantly periplasmic. The chain is Cell division protein FtsB from Saccharophagus degradans (strain 2-40 / ATCC 43961 / DSM 17024).